Consider the following 512-residue polypeptide: Histidine ammonia-lyase (512 aa).

A cross-link (5-imidazolinone (Ala-Gly)) is located at residues 146 to 148 (ASG). Serine 147 carries the 2,3-didehydroalanine (Ser) modification.

It belongs to the PAL/histidase family. In terms of processing, contains an active site 4-methylidene-imidazol-5-one (MIO), which is formed autocatalytically by cyclization and dehydration of residues Ala-Ser-Gly.

The protein resides in the cytoplasm. The enzyme catalyses L-histidine = trans-urocanate + NH4(+). Its pathway is amino-acid degradation; L-histidine degradation into L-glutamate; N-formimidoyl-L-glutamate from L-histidine: step 1/3. The sequence is that of Histidine ammonia-lyase from Paracidovorax citrulli (strain AAC00-1) (Acidovorax citrulli).